We begin with the raw amino-acid sequence, 153 residues long: SsrA-binding protein (153 aa).

The tract at residues 129–153 is disordered; sequence KREDMKKKDQSREMAQALREKSKSH.

It belongs to the SmpB family.

Its subcellular location is the cytoplasm. Functionally, required for rescue of stalled ribosomes mediated by trans-translation. Binds to transfer-messenger RNA (tmRNA), required for stable association of tmRNA with ribosomes. tmRNA and SmpB together mimic tRNA shape, replacing the anticodon stem-loop with SmpB. tmRNA is encoded by the ssrA gene; the 2 termini fold to resemble tRNA(Ala) and it encodes a 'tag peptide', a short internal open reading frame. During trans-translation Ala-aminoacylated tmRNA acts like a tRNA, entering the A-site of stalled ribosomes, displacing the stalled mRNA. The ribosome then switches to translate the ORF on the tmRNA; the nascent peptide is terminated with the 'tag peptide' encoded by the tmRNA and targeted for degradation. The ribosome is freed to recommence translation, which seems to be the essential function of trans-translation. The chain is SsrA-binding protein from Geobacter sulfurreducens (strain ATCC 51573 / DSM 12127 / PCA).